A 631-amino-acid polypeptide reads, in one-letter code: Phosphomethylpyrimidine synthase (631 aa).

Substrate is bound by residues asparagine 239, methionine 268, tyrosine 297, histidine 333, 353-355 (SRG), 394-397 (DGLR), and glutamate 433. Histidine 437 serves as a coordination point for Zn(2+). Substrate is bound at residue tyrosine 460. Histidine 501 is a binding site for Zn(2+). [4Fe-4S] cluster contacts are provided by cysteine 581, cysteine 584, and cysteine 589.

This sequence belongs to the ThiC family. In terms of assembly, homodimer. The cofactor is [4Fe-4S] cluster.

The enzyme catalyses 5-amino-1-(5-phospho-beta-D-ribosyl)imidazole + S-adenosyl-L-methionine = 4-amino-2-methyl-5-(phosphooxymethyl)pyrimidine + CO + 5'-deoxyadenosine + formate + L-methionine + 3 H(+). The protein operates within cofactor biosynthesis; thiamine diphosphate biosynthesis. Catalyzes the synthesis of the hydroxymethylpyrimidine phosphate (HMP-P) moiety of thiamine from aminoimidazole ribotide (AIR) in a radical S-adenosyl-L-methionine (SAM)-dependent reaction. The sequence is that of Phosphomethylpyrimidine synthase from Shigella flexneri serotype 5b (strain 8401).